The chain runs to 155 residues: Ribosomal RNA large subunit methyltransferase H 1 (155 aa).

Residues L76, G108, and 127 to 132 (FSKMTF) each bind S-adenosyl-L-methionine.

It belongs to the RNA methyltransferase RlmH family. As to quaternary structure, homodimer.

Its subcellular location is the cytoplasm. It carries out the reaction pseudouridine(1915) in 23S rRNA + S-adenosyl-L-methionine = N(3)-methylpseudouridine(1915) in 23S rRNA + S-adenosyl-L-homocysteine + H(+). Its function is as follows. Specifically methylates the pseudouridine at position 1915 (m3Psi1915) in 23S rRNA. The sequence is that of Ribosomal RNA large subunit methyltransferase H 1 from Thermoanaerobacter pseudethanolicus (strain ATCC 33223 / 39E) (Clostridium thermohydrosulfuricum).